Here is a 1334-residue protein sequence, read N- to C-terminus: Adenylate cyclase type 9 (1334 aa).

Disordered regions lie at residues 1–28 (MASP…SNSV) and 49–71 (ISSS…GLRR). Topologically, residues 1–113 (MASPPHQQLL…CFPQTQRRFR (113 aa)) are cytoplasmic. Positions 16–28 (EVSCDSSGDSNSV) are enriched in polar residues. The segment covering 57–69 (ESGGVGRGGGGGL) has biased composition (gly residues). The chain crosses the membrane as a helical span at residues 114-134 (YALFYIGSACLLWGIYFGVHM). Residues 135–137 (REK) lie on the Extracellular side of the membrane. The helical transmembrane segment at 138 to 158 (QMVFMVPALCFLLVCVAFFAF) threads the bilayer. At 159-167 (TFTKAYARR) the chain is on the cytoplasmic side. The chain crosses the membrane as a helical span at residues 168 to 187 (YVWTSGYTLLVFALTLAPQF). At 188–207 (QPWTLGERQRVQPRPAAPVD) the chain is on the extracellular side. A helical transmembrane segment spans residues 208 to 227 (TCLSQVGSFSMCVEVLLLLY). The Cytoplasmic segment spans residues 228-233 (TVMHLP). A helical transmembrane segment spans residues 234–250 (LYLSLFLGLSYSVLFET). Residues 251–269 (SAFRDESCTLLGGGAVYWE) lie on the Extracellular side of the membrane. The chain crosses the membrane as a helical span at residues 270-290 (LLSKAFLHVCIHAIGIHLFIM). The Cytoplasmic portion of the chain corresponds to 291–768 (SEVRSRSTFL…VKTFASATFS (478 aa)). The segment at 338–363 (QGDDESENSVKRHSTSSPKNRKKKPS) is disordered. Basic residues predominate over residues 348 to 363 (KRHSTSSPKNRKKKPS). Positions 388, 389, and 432 each coordinate Mg(2+). ATP is bound by residues 388–393 (DIVGFT), 430–432 (LGD), and Arg-476. The interval 635–670 (GCQDEHKNSTKAPGGHSPKTQNGLLSPPQEEKLSNS) is disordered. The chain crosses the membrane as a helical span at residues 769-789 (SLLDVFLSTTVFLILSVTCFL). Residues 790–800 (KHGMVASPPPP) are Extracellular-facing. A helical membrane pass occupies residues 801-821 (AAVVVFVIAILLEVLSLVISV). Residues 822 to 849 (RMVFFLEEVMACTKRLLELISGWLPRHF) lie on the Cytoplasmic side of the membrane. Residues 850 to 870 (LGAILVSLPALAVFSHFTSDF) form a helical membrane-spanning segment. Topologically, residues 871–873 (ETN) are extracellular. A helical membrane pass occupies residues 874 to 894 (IHYTMFMCCAILIAIVQYCNF). At 895 to 902 (CQLSSWMR) the chain is on the cytoplasmic side. Residues 903-923 (SLLATVVGAVLLILLYVSLCP) form a helical membrane-spanning segment. Over 924–957 (DSSVETLHLDLAQNLSSRKSPCNSSMPADVKRPA) the chain is Extracellular. Asn-937 and Asn-946 each carry an N-linked (GlcNAc...) asparagine glycan. A helical transmembrane segment spans residues 958–978 (DLIGQEVILAVFLLLLLVWFL). The Cytoplasmic segment spans residues 979–1334 (NRSFEVSYRL…LTKLNVSKSV (356 aa)). Residues Lys-1090, 1167-1169 (DIW), 1174-1178 (NIASR), and Lys-1214 contribute to the ATP site. Positions 1266–1303 (SVQNSDKTAHATDNSETKDALPSSKKLQKEPTKAEERC) are disordered. Basic and acidic residues-rich tracts occupy residues 1272–1284 (KTAH…ETKD) and 1292–1303 (LQKEPTKAEERC).

Belongs to the adenylyl cyclase class-4/guanylyl cyclase family. Mg(2+) is required as a cofactor. It depends on Mn(2+) as a cofactor. In terms of tissue distribution, detected in embryonic heart (at protein level).

It is found in the cell membrane. Its subcellular location is the membrane. It carries out the reaction ATP = 3',5'-cyclic AMP + diphosphate. With respect to regulation, insensitive to calcium/calmodulin, forskolin and somatostatin. Stimulated by beta-adrenergic receptor activation. Activity is down-regulated by calcium/calcineurin. Its function is as follows. Adenylyl cyclase that catalyzes the formation of the signaling molecule cAMP in response to activation of G protein-coupled receptors. The protein is Adenylate cyclase type 9 (ADCY9) of Gallus gallus (Chicken).